We begin with the raw amino-acid sequence, 220 residues long: Deoxyribose-phosphate aldolase (220 aa).

Catalysis depends on aspartate 89, which acts as the Proton donor/acceptor. Lysine 151 acts as the Schiff-base intermediate with acetaldehyde in catalysis. The active-site Proton donor/acceptor is lysine 180.

Belongs to the DeoC/FbaB aldolase family. DeoC type 1 subfamily.

The protein resides in the cytoplasm. It carries out the reaction 2-deoxy-D-ribose 5-phosphate = D-glyceraldehyde 3-phosphate + acetaldehyde. It participates in carbohydrate degradation; 2-deoxy-D-ribose 1-phosphate degradation; D-glyceraldehyde 3-phosphate and acetaldehyde from 2-deoxy-alpha-D-ribose 1-phosphate: step 2/2. Its function is as follows. Catalyzes a reversible aldol reaction between acetaldehyde and D-glyceraldehyde 3-phosphate to generate 2-deoxy-D-ribose 5-phosphate. The sequence is that of Deoxyribose-phosphate aldolase from Streptococcus pneumoniae serotype 19F (strain G54).